Reading from the N-terminus, the 429-residue chain is Protein arginine N-methyltransferase 2 (429 aa).

Disordered stretches follow at residues 41–76 (PEVA…EDHE) and 137–180 (ALDS…EETP). Residues 137–163 (ALDSDDEDDEEMAEGEEAQAEDGEEAP) are compositionally biased toward acidic residues. Over residues 164–174 (ELVAAEEATQT) the composition is skewed to low complexity. Residues 190–429 (LEEQVTSDKY…YRLPVCTFLG (240 aa)) enclose the RMT2 domain. Residues Y199, M228, 250–255 (FGMGII), 271–273 (EAH), 308–309 (WQ), and D328 each bind S-adenosyl-L-methionine.

This sequence belongs to the class I-like SAM-binding methyltransferase superfamily. RMT2 methyltransferase family. Monomer.

It is found in the cytoplasm. Its subcellular location is the nucleus. Functionally, S-adenosyl-L-methionine-dependent protein-arginine N-methyltransferase that methylates the delta-nitrogen atom of arginine residues to form N5-methylarginine (type IV) in target proteins. Monomethylates ribosomal protein L12. This chain is Protein arginine N-methyltransferase 2, found in Neurospora crassa (strain ATCC 24698 / 74-OR23-1A / CBS 708.71 / DSM 1257 / FGSC 987).